The primary structure comprises 578 residues: GTP diphosphokinase CRSH3, chloroplastic (578 aa).

The transit peptide at 1–45 (MANAGVNETVAVAVAIDAPGVGHDHGAAGEVRRPSTRRLAPAGSG) directs the protein to the chloroplast. An HD domain is found at 99–199 (SVSRALVVAA…LELAVKLDAM (101 aa)). EF-hand domains follow at residues 468–503 (ATAG…LGAG) and 506–537 (DAEE…VKLK). Residues D481, N483, D485, R487, E492, D515, N517, D519, S521, and E526 each contribute to the Ca(2+) site.

This sequence belongs to the RelA/SpoT family. In terms of tissue distribution, expressed in roots and shoots.

The protein resides in the plastid. It localises to the chloroplast. The enzyme catalyses GTP + ATP = guanosine 3'-diphosphate 5'-triphosphate + AMP. Its activity is regulated as follows. Activated by calcium. Possesses calcium-dependent ppGpp (guanosine 3'-diphosphate 5'-diphosphate) synthetase activity in vitro and is able to functionally complement E.coli relA mutants. May be involved in a rapid plant ppGpp-mediated response to pathogens and other stresses. The sequence is that of GTP diphosphokinase CRSH3, chloroplastic from Oryza sativa subsp. japonica (Rice).